The following is a 212-amino-acid chain: Interleukin-6 (212 aa).

A signal peptide spans 1-29 (MTSFSTSAFRPVAFSLGLLLVMPAAFPAP). Cysteines 72 and 78 form a disulfide. Asparagine 73 is a glycosylation site (N-linked (GlcNAc...) asparagine). Residue serine 81 is modified to Phosphoserine. A disulfide bridge links cysteine 101 with cysteine 111. N-linked (GlcNAc...) asparagine glycosylation is found at asparagine 160 and asparagine 172.

It belongs to the IL-6 superfamily. Component of a hexamer of two molecules each of IL6, IL6R and IL6ST; first binds to IL6R to associate with the signaling subunit IL6ST. Interacts with IL6R (via the N-terminal ectodomain); this interaction may be affected by IL6R-binding with SORL1, hence decreasing IL6 cis signaling. Interacts with SORL1 (via the N-terminal ectodomain); this interaction leads to IL6 internalization and lysosomal degradation. May form a trimeric complex with the soluble SORL1 ectodomain and soluble IL6R receptor; this interaction might stabilize circulating IL6, hence promoting IL6 trans signaling.

It is found in the secreted. In terms of biological role, cytokine with a wide variety of biological functions in immunity, tissue regeneration, and metabolism. Binds to IL6R, then the complex associates to the signaling subunit IL6ST/gp130 to trigger the intracellular IL6-signaling pathway. The interaction with the membrane-bound IL6R and IL6ST stimulates 'classic signaling', whereas the binding of IL6 and soluble IL6R to IL6ST stimulates 'trans-signaling'. Alternatively, 'cluster signaling' occurs when membrane-bound IL6:IL6R complexes on transmitter cells activate IL6ST receptors on neighboring receiver cells. Functionally, IL6 is a potent inducer of the acute phase response. Rapid production of IL6 contributes to host defense during infection and tissue injury, but excessive IL6 synthesis is involved in disease pathology. In the innate immune response, is synthesized by myeloid cells, such as macrophages and dendritic cells, upon recognition of pathogens through toll-like receptors (TLRs) at the site of infection or tissue injury. In the adaptive immune response, is required for the differentiation of B cells into immunoglobulin-secreting cells. Plays a major role in the differentiation of CD4(+) T cell subsets. Essential factor for the development of T follicular helper (Tfh) cells that are required for the induction of germinal-center formation. Required to drive naive CD4(+) T cells to the Th17 lineage. Also required for proliferation of myeloma cells and the survival of plasmablast cells. Its function is as follows. Acts as an essential factor in bone homeostasis and on vessels directly or indirectly by induction of VEGF, resulting in increased angiogenesis activity and vascular permeability. Induces, through 'trans-signaling' and synergistically with IL1B and TNF, the production of VEGF. Involved in metabolic controls, is discharged into the bloodstream after muscle contraction increasing lipolysis and improving insulin resistance. 'Trans-signaling' in central nervous system also regulates energy and glucose homeostasis. Mediates, through GLP-1, crosstalk between insulin-sensitive tissues, intestinal L cells and pancreatic islets to adapt to changes in insulin demand. Also acts as a myokine. Plays a protective role during liver injury, being required for maintenance of tissue regeneration. Also has a pivotal role in iron metabolism by regulating HAMP/hepcidin expression upon inflammation or bacterial infection. Through activation of IL6ST-YAP-NOTCH pathway, induces inflammation-induced epithelial regeneration. In Saimiri sciureus (Common squirrel monkey), this protein is Interleukin-6 (IL6).